Reading from the N-terminus, the 216-residue chain is GTP cyclohydrolase 1 (216 aa).

Zn(2+) contacts are provided by cysteine 108, histidine 111, and cysteine 179.

This sequence belongs to the GTP cyclohydrolase I family. As to quaternary structure, toroid-shaped homodecamer, composed of two pentamers of five dimers.

It carries out the reaction GTP + H2O = 7,8-dihydroneopterin 3'-triphosphate + formate + H(+). It functions in the pathway cofactor biosynthesis; 7,8-dihydroneopterin triphosphate biosynthesis; 7,8-dihydroneopterin triphosphate from GTP: step 1/1. This Shewanella amazonensis (strain ATCC BAA-1098 / SB2B) protein is GTP cyclohydrolase 1.